Here is a 160-residue protein sequence, read N- to C-terminus: SsrA-binding protein (160 aa).

The tract at residues 136 to 160 (KRHVEKERDANREVQRAMRSKGKDD) is disordered.

Belongs to the SmpB family.

The protein resides in the cytoplasm. Functionally, required for rescue of stalled ribosomes mediated by trans-translation. Binds to transfer-messenger RNA (tmRNA), required for stable association of tmRNA with ribosomes. tmRNA and SmpB together mimic tRNA shape, replacing the anticodon stem-loop with SmpB. tmRNA is encoded by the ssrA gene; the 2 termini fold to resemble tRNA(Ala) and it encodes a 'tag peptide', a short internal open reading frame. During trans-translation Ala-aminoacylated tmRNA acts like a tRNA, entering the A-site of stalled ribosomes, displacing the stalled mRNA. The ribosome then switches to translate the ORF on the tmRNA; the nascent peptide is terminated with the 'tag peptide' encoded by the tmRNA and targeted for degradation. The ribosome is freed to recommence translation, which seems to be the essential function of trans-translation. The polypeptide is SsrA-binding protein (Ectopseudomonas mendocina (strain ymp) (Pseudomonas mendocina)).